The primary structure comprises 530 residues: Hyccin 2 (530 aa).

Residues T30 and T306 each carry the phosphothreonine modification. Phosphoserine is present on residues S321 and S341. The segment at 328-410 (RREGAEGVNG…DSVVRKQYVQ (83 aa)) is disordered. Residues 353-373 (SGASLSSQPIGTKPSSSSQRG) are compositionally biased toward polar residues. S430, S442, S444, and S491 each carry phosphoserine. The tract at residues 498-530 (GQAGEGKELLSPGAPLTKQSRSPSFNMQLISQV) is disordered. Residues 514–530 (TKQSRSPSFNMQLISQV) are compositionally biased toward polar residues.

This sequence belongs to the Hyccin family. Component of a phosphatidylinositol 4-kinase (PI4K) complex, composed of PI4KA, EFR3 (EFR3A or EFR3B), TTC7 (TTC7A or TTC7B) and HYCC (HYCC1 or HYCC2).

It localises to the cytoplasm. It is found in the cytosol. The protein localises to the cell membrane. Component of a complex required to localize phosphatidylinositol 4-kinase (PI4K) to the plasma membrane. This Pongo abelii (Sumatran orangutan) protein is Hyccin 2 (HYCC2).